Here is a 120-residue protein sequence, read N- to C-terminus: Small ribosomal subunit protein uS13 (120 aa).

Residues 96–120 (PCRGQRTRTNARTRKGPRKAIAGKK) are disordered.

Belongs to the universal ribosomal protein uS13 family. Part of the 30S ribosomal subunit. Forms a loose heterodimer with protein S19. Forms two bridges to the 50S subunit in the 70S ribosome.

Located at the top of the head of the 30S subunit, it contacts several helices of the 16S rRNA. In the 70S ribosome it contacts the 23S rRNA (bridge B1a) and protein L5 of the 50S subunit (bridge B1b), connecting the 2 subunits; these bridges are implicated in subunit movement. Contacts the tRNAs in the A and P-sites. This is Small ribosomal subunit protein uS13 from Neisseria gonorrhoeae (strain ATCC 700825 / FA 1090).